The primary structure comprises 297 residues: ClpXP adapter protein SpxH (297 aa).

The protein belongs to the SpxH family. Interacts with Spx.

The protein resides in the cytoplasm. In terms of biological role, adapter protein required for efficient degradation of Spx by ClpXP under non-stress conditions. Interaction with Spx stabilizes Spx and exposes the C-terminus of Spx for recognition and proteolysis by ClpXP. In Bacillus cereus (strain ATCC 10987 / NRS 248), this protein is ClpXP adapter protein SpxH.